The sequence spans 301 residues: MNIVVGTRGSNLALIQTEWVINELKKKYPEISFEIKIIKTKGDLIQNVSLDKIGDKGLFVKEIEQQLLDGKIDIAVHSMKDMPSYLANGLKFAHTPKREDPRDVLILREGYKNLDDLPHGAVIGTGSKRRKFQLLKQRPDLNIVQVRGNVETRIRKIKDENMHGIVLAASGIIRANLQDKISSYLPVDVVIPAPAQGALAIEIRSNDSAIEGIVNSLKDENTEIQILAERGFLDGVNGSCHIPMAAYCEIIQDKIHLTGLYGDSEGKKVVIKSIDGDISSPRELGLKLAKLVLKEYENYEG.

Cys240 carries the post-translational modification S-(dipyrrolylmethanemethyl)cysteine.

Belongs to the HMBS family. In terms of assembly, monomer. Dipyrromethane is required as a cofactor.

It catalyses the reaction 4 porphobilinogen + H2O = hydroxymethylbilane + 4 NH4(+). The protein operates within porphyrin-containing compound metabolism; protoporphyrin-IX biosynthesis; coproporphyrinogen-III from 5-aminolevulinate: step 2/4. Tetrapolymerization of the monopyrrole PBG into the hydroxymethylbilane pre-uroporphyrinogen in several discrete steps. The protein is Porphobilinogen deaminase of Clostridioides difficile (strain 630) (Peptoclostridium difficile).